Reading from the N-terminus, the 328-residue chain is MKLTVLGAGAWGTALAASWASQHAVTLWGRNARDVDTMRASRVNTHYLPGCPLPSSLALSADFDRALEAAELIVIAVPSSGLRATLAALARRPALPPILWVCKGFEPGTRRLPHQLVAELLPAGAETGVLSGPSFAQEVAHGYPTALTLASADIALAQRLAEALSGNRLRLYAHDDVVGVEIGGALKNVMAIAAGICDGLNFGHNARAALITRGLAEMTRLGVDSGGRFETFMGLSGLGDLILTTTGDLSRNRQVGLRVAKGQPLDRILDELGHVAEGVTTAREVAALAAERGVEMPIARMVCRILFEGLPASEAVDSLLNREIRSEF.

Residues W11, R30, and K103 each contribute to the NADPH site. Positions 103, 132, and 134 each coordinate sn-glycerol 3-phosphate. An NADPH-binding site is contributed by A136. Sn-glycerol 3-phosphate-binding residues include K187, D240, S250, R251, and N252. K187 (proton acceptor) is an active-site residue. NADPH is bound at residue R251. Positions 275 and 277 each coordinate NADPH.

The protein belongs to the NAD-dependent glycerol-3-phosphate dehydrogenase family.

It localises to the cytoplasm. It catalyses the reaction sn-glycerol 3-phosphate + NAD(+) = dihydroxyacetone phosphate + NADH + H(+). The catalysed reaction is sn-glycerol 3-phosphate + NADP(+) = dihydroxyacetone phosphate + NADPH + H(+). Its pathway is membrane lipid metabolism; glycerophospholipid metabolism. Functionally, catalyzes the reduction of the glycolytic intermediate dihydroxyacetone phosphate (DHAP) to sn-glycerol 3-phosphate (G3P), the key precursor for phospholipid synthesis. The sequence is that of Glycerol-3-phosphate dehydrogenase [NAD(P)+] from Thiobacillus denitrificans (strain ATCC 25259 / T1).